A 145-amino-acid chain; its full sequence is Transcription antitermination protein NusB (145 aa).

Belongs to the NusB family.

In terms of biological role, involved in transcription antitermination. Required for transcription of ribosomal RNA (rRNA) genes. Binds specifically to the boxA antiterminator sequence of the ribosomal RNA (rrn) operons. The sequence is that of Transcription antitermination protein NusB from Acidothermus cellulolyticus (strain ATCC 43068 / DSM 8971 / 11B).